Here is a 177-residue protein sequence, read N- to C-terminus: Large ribosomal subunit protein uL6 (177 aa).

Belongs to the universal ribosomal protein uL6 family. As to quaternary structure, part of the 50S ribosomal subunit.

In terms of biological role, this protein binds to the 23S rRNA, and is important in its secondary structure. It is located near the subunit interface in the base of the L7/L12 stalk, and near the tRNA binding site of the peptidyltransferase center. This is Large ribosomal subunit protein uL6 from Alkalilimnicola ehrlichii (strain ATCC BAA-1101 / DSM 17681 / MLHE-1).